The following is a 334-amino-acid chain: Heat-inducible transcription repressor HrcA (334 aa).

Belongs to the HrcA family.

Negative regulator of class I heat shock genes (grpE-dnaK-dnaJ and groELS operons). Prevents heat-shock induction of these operons. The chain is Heat-inducible transcription repressor HrcA from Albidiferax ferrireducens (strain ATCC BAA-621 / DSM 15236 / T118) (Rhodoferax ferrireducens).